The primary structure comprises 357 residues: uncharacterized protein (357 aa).

Positions 27–242 (HFGNTVTFER…VSSVRLNFPK (216 aa)) constitute a Radical SAM core domain. [4Fe-4S] cluster is bound by residues C44, C50, and C53.

[4Fe-4S] cluster serves as cofactor.

This is an uncharacterized protein from Methanocaldococcus jannaschii (strain ATCC 43067 / DSM 2661 / JAL-1 / JCM 10045 / NBRC 100440) (Methanococcus jannaschii).